The sequence spans 98 residues: NADH-ubiquinone oxidoreductase chain 4L (98 aa).

3 helical membrane passes run 1–21 (MVLI…GVLI), 36–56 (MMLS…MFSI), and 61–81 (LILL…LVSI).

This sequence belongs to the complex I subunit 4L family.

It localises to the mitochondrion membrane. It carries out the reaction a ubiquinone + NADH + 5 H(+)(in) = a ubiquinol + NAD(+) + 4 H(+)(out). Functionally, core subunit of the mitochondrial membrane respiratory chain NADH dehydrogenase (Complex I) which catalyzes electron transfer from NADH through the respiratory chain, using ubiquinone as an electron acceptor. Part of the enzyme membrane arm which is embedded in the lipid bilayer and involved in proton translocation. This Didelphis virginiana (North American opossum) protein is NADH-ubiquinone oxidoreductase chain 4L (MT-ND4L).